A 307-amino-acid polypeptide reads, in one-letter code: Aspartate carbamoyltransferase catalytic subunit (307 aa).

Positions 55 and 56 each coordinate carbamoyl phosphate. Lys-85 contacts L-aspartate. Residues Arg-106, His-135, and Gln-138 each contribute to the carbamoyl phosphate site. Arg-168 and Arg-230 together coordinate L-aspartate. Leu-268 and Pro-269 together coordinate carbamoyl phosphate.

The protein belongs to the aspartate/ornithine carbamoyltransferase superfamily. ATCase family. In terms of assembly, heterododecamer (2C3:3R2) of six catalytic PyrB chains organized as two trimers (C3), and six regulatory PyrI chains organized as three dimers (R2).

It catalyses the reaction carbamoyl phosphate + L-aspartate = N-carbamoyl-L-aspartate + phosphate + H(+). It participates in pyrimidine metabolism; UMP biosynthesis via de novo pathway; (S)-dihydroorotate from bicarbonate: step 2/3. Catalyzes the condensation of carbamoyl phosphate and aspartate to form carbamoyl aspartate and inorganic phosphate, the committed step in the de novo pyrimidine nucleotide biosynthesis pathway. The sequence is that of Aspartate carbamoyltransferase catalytic subunit from Photorhabdus laumondii subsp. laumondii (strain DSM 15139 / CIP 105565 / TT01) (Photorhabdus luminescens subsp. laumondii).